Reading from the N-terminus, the 61-residue chain is UPF0391 membrane protein Bpro_0066 (61 aa).

The next 2 membrane-spanning stretches (helical) occupy residues Ala-5–Ala-25 and Ile-33–Val-53.

The protein belongs to the UPF0391 family.

It localises to the cell membrane. The protein is UPF0391 membrane protein Bpro_0066 of Polaromonas sp. (strain JS666 / ATCC BAA-500).